A 148-amino-acid polypeptide reads, in one-letter code: Thioredoxin H8 (148 aa).

A Thioredoxin domain is found at 1–145 (MGANVSTPDQ…LERKLNKYTQ (145 aa)). Active-site nucleophile residues include Cys-71 and Cys-74. Cys-71 and Cys-74 are joined by a disulfide.

Belongs to the thioredoxin family. Plant H-type subfamily.

Its subcellular location is the cytoplasm. Its function is as follows. Probable thiol-disulfide oxidoreductase that may be involved in the redox regulation of a number of cytosolic enzymes. In Arabidopsis thaliana (Mouse-ear cress), this protein is Thioredoxin H8 (TRX8).